A 132-amino-acid polypeptide reads, in one-letter code: Translation initiation factor 5A (132 aa).

At K36 the chain carries Hypusine.

It belongs to the eIF-5A family.

The protein resides in the cytoplasm. In terms of biological role, functions by promoting the formation of the first peptide bond. The chain is Translation initiation factor 5A (eIF5A) from Desulfurococcus amylolyticus (strain DSM 18924 / JCM 16383 / VKM B-2413 / 1221n) (Desulfurococcus kamchatkensis).